A 186-amino-acid polypeptide reads, in one-letter code: Small ribosomal subunit protein eS7 (186 aa).

The protein belongs to the eukaryotic ribosomal protein eS7 family. In terms of assembly, component of the small ribosomal subunit. Mature ribosomes consist of a small (40S) and a large (60S) subunit. The 40S subunit contains about 32 different proteins and 1 molecule of RNA (18S). The 60S subunit contains 45 different proteins and 3 molecules of RNA (25S, 5.8S and 5S).

The protein localises to the cytoplasm. In terms of biological role, component of the ribosome, a large ribonucleoprotein complex responsible for the synthesis of proteins in the cell. The small ribosomal subunit (SSU) binds messenger RNAs (mRNAs) and translates the encoded message by selecting cognate aminoacyl-transfer RNA (tRNA) molecules. The large subunit (LSU) contains the ribosomal catalytic site termed the peptidyl transferase center (PTC), which catalyzes the formation of peptide bonds, thereby polymerizing the amino acids delivered by tRNAs into a polypeptide chain. The nascent polypeptides leave the ribosome through a tunnel in the LSU and interact with protein factors that function in enzymatic processing, targeting, and the membrane insertion of nascent chains at the exit of the ribosomal tunnel. RPS7A is involved in nucleolar processing of pre-18S ribosomal RNA and ribosome assembly. This Candida albicans (strain SC5314 / ATCC MYA-2876) (Yeast) protein is Small ribosomal subunit protein eS7 (RPS7A).